The sequence spans 392 residues: Glutamine synthetase (392 aa).

The GS beta-grasp domain occupies 26-106 (VQVTYVWIDG…VMCEVLKYNR (81 aa)). Residues 113 to 392 (LRHTCKKIME…MASPRDAAVF (280 aa)) form the GS catalytic domain. Residue Glu134 coordinates ATP. 4 residues coordinate Mn(2+): Glu134, Glu136, Glu196, and Glu203. Residue 203–208 (EFQVGP) participates in ATP binding. An L-glutamate-binding site is contributed by 246–247 (NW). A Mn(2+)-binding site is contributed by His253. Residues 255 to 257 (NYS), Arg319, and Arg324 contribute to the ATP site. Arg319 provides a ligand contact to L-glutamate. 336-338 (YFE) lines the ADP pocket. Glu338 serves as a coordination point for Mn(2+). An L-glutamate-binding site is contributed by Arg340.

It belongs to the glutamine synthetase family. The cofactor is Mg(2+). It depends on Mn(2+) as a cofactor.

The protein resides in the cytoplasm. It is found in the cytosol. It localises to the microsome. Its subcellular location is the mitochondrion. It carries out the reaction L-glutamate + NH4(+) + ATP = L-glutamine + ADP + phosphate + H(+). In terms of biological role, glutamine synthetase that catalyzes the ATP-dependent conversion of glutamate and ammonia to glutamine. The chain is Glutamine synthetase from Xenopus laevis (African clawed frog).